A 340-amino-acid chain; its full sequence is Protein-arginine kinase (340 aa).

One can recognise a Phosphagen kinase C-terminal domain in the interval 21–242 (VVLSSRIRLA…EQIIMQERVA (222 aa)). ATP contacts are provided by residues 24–28 (SSRIR), His79, Arg113, 164–168 (RASVM), and 195–200 (RGIYGE).

Belongs to the ATP:guanido phosphotransferase family.

It catalyses the reaction L-arginyl-[protein] + ATP = N(omega)-phospho-L-arginyl-[protein] + ADP + H(+). Functionally, catalyzes the specific phosphorylation of arginine residues in proteins. The polypeptide is Protein-arginine kinase (Listeria monocytogenes serotype 4b (strain CLIP80459)).